A 687-amino-acid chain; its full sequence is CWF19-like protein 2 homolog (687 aa).

Residues Phe6 to Asp51 adopt a coiled-coil conformation. The segment covering Glu24–Ala50 has biased composition (basic and acidic residues). Residues Glu24 to Asp281 form a disordered region. Residues Lys66 to Asn92 show a composition bias toward basic residues. The span at Ser93–Phe107 shows a compositional bias: low complexity. Positions Ser108 to Glu131 form a coiled coil. The segment covering Arg114–Arg125 has biased composition (basic residues). Phosphoserine occurs at positions 128 and 130. Basic and acidic residues-rich tracts occupy residues Val146–Trp157 and Phe168–Glu180. The stretch at Lys290–Glu325 forms a coiled coil. The tract at residues Val355–Thr383 is disordered. Positions Lys444–Arg475 form a coiled coil.

Belongs to the CWF19 family.

The polypeptide is CWF19-like protein 2 homolog (Drosophila melanogaster (Fruit fly)).